The chain runs to 725 residues: Catalase-peroxidase (725 aa).

Composition is skewed to polar residues over residues 1-12 (MSTSNDPSNNAS) and 23-32 (PKQSAGSGTA). A signal peptide spans 1-20 (MSTSNDPSNNASAGKCPFHA). Residues 1–35 (MSTSNDPSNNASAGKCPFHAETPKQSAGSGTANRD) are disordered. The tryptophyl-tyrosyl-methioninium (Trp-Tyr) (with M-252) cross-link spans 105–226 (WHGAGTYRTV…IGATEMGLIY (122 aa)). Catalysis depends on His-106, which acts as the Proton acceptor. Positions 226-252 (YVNPEGPNASGEPLSAAAAIRATFGNM) form a cross-link, tryptophyl-tyrosyl-methioninium (Tyr-Met) (with W-105). A heme b-binding site is contributed by His-267.

Belongs to the peroxidase family. Peroxidase/catalase subfamily. In terms of assembly, homodimer or homotetramer. The cofactor is heme b. Post-translationally, formation of the three residue Trp-Tyr-Met cross-link is important for the catalase, but not the peroxidase activity of the enzyme.

It catalyses the reaction H2O2 + AH2 = A + 2 H2O. It carries out the reaction 2 H2O2 = O2 + 2 H2O. Bifunctional enzyme with both catalase and broad-spectrum peroxidase activity. The polypeptide is Catalase-peroxidase (Klebsiella pneumoniae subsp. pneumoniae (strain ATCC 700721 / MGH 78578)).